Reading from the N-terminus, the 224-residue chain is Elongation factor 1-beta (224 aa).

Belongs to the EF-1-beta/EF-1-delta family. In terms of assembly, EF-1 is composed of 4 subunits: alpha, beta (1B-alpha=beta'), delta (1B-beta), and gamma (1B-gamma).

Functionally, EF-1-beta and EF-1-beta' stimulate the exchange of GDP bound to EF-1-alpha to GTP. The protein is Elongation factor 1-beta of Oryza sativa subsp. japonica (Rice).